The following is a 163-amino-acid chain: T-cell surface glycoprotein CD3 zeta chain (163 aa).

The first 21 residues, 1 to 21 (MKWKALFTAAILQAQLPITEA), serve as a signal peptide directing secretion. At 22–30 (QSFGLLDPK) the chain is on the extracellular side. Residues 31–51 (LCYLLDGILFIYGVILTALFL) form a helical membrane-spanning segment. Residues 52-163 (RVKFSRSADA…ALHMQALPPR (112 aa)) lie on the Cytoplasmic side of the membrane. Residue Ser-58 is modified to Phosphoserine. ITAM domains are found at residues 61-89 (APAYQQGQNQLYNELNLGRREEYDVLDKR), 99-127 (KPRRKNPQEGLYNELQKDKMAEAYSEIGM), and 130-158 (ERRRGKGHDGLYQGLSTATKDTYDALHMQ). 7 positions are modified to phosphotyrosine: Tyr-64, Tyr-72, Tyr-83, Tyr-110, Tyr-122, Tyr-141, and Tyr-152. The segment covering 83 to 98 (YDVLDKRRGRDPEMGG) has biased composition (basic and acidic residues). The segment at 83–111 (YDVLDKRRGRDPEMGGKPRRKNPQEGLYN) is disordered.

Belongs to the CD3Z/FCER1G family. The TCR-CD3 complex is composed of a CD3D/CD3E and a CD3G/CD3E heterodimers that preferentially associate with TCRalpha and TCRbeta, respectively, to form TCRalpha/CD3E/CD3G and TCRbeta/CD3G/CD3E trimers. In turn, the hexamer interacts with CD3Z homodimer to form the TCR-CD3 complex. Alternatively, TCRalpha and TCRbeta can be replaced by TCRgamma and TCRdelta. Interacts with SLA. Interacts with TRAT1. Interacts with DOCK2. Interacts with SLA2. Interacts with SHB. Interacts with ZAP70. Interacts (tyrosine phosphorylated) with SHC1 (via SH2 domain). Interacts with PTPRC. Interacts with CRK; this interaction regulates CD3Z phosphorylation. Interacts (on T cell side) with CD81, ICAM1 and CD9 at immunological synapses between antigen-presenting cells and T cells. Interacts with CD160. Interacts with LY6E. Interacts with LY6E. The signaling subunit of immunoglobulin gamma (IgG) Fc receptor complex. As a homodimer or a heterodimer with FCER1G, associates with the ligand binding subunit FCGR3A (via transmembrane domain); this interaction is a prerequisite for Fc receptor complex expression on the cell surface. Interacts with CD5. In terms of processing, phosphorylated on Tyr residues after T-cell receptor triggering by LCK in association with CD4/CD8.

It localises to the cell membrane. Its function is as follows. Part of the TCR-CD3 complex present on T-lymphocyte cell surface that plays an essential role in adaptive immune response. When antigen presenting cells (APCs) activate T-cell receptor (TCR), TCR-mediated signals are transmitted across the cell membrane by the CD3 chains CD3D, CD3E, CD3G and CD3Z. All CD3 chains contain immunoreceptor tyrosine-based activation motifs (ITAMs) in their cytoplasmic domain. Upon TCR engagement, these motifs become phosphorylated by Src family protein tyrosine kinases LCK and FYN, resulting in the activation of downstream signaling pathways. CD3Z ITAMs phosphorylation creates multiple docking sites for the protein kinase ZAP70 leading to ZAP70 phosphorylation and its conversion into a catalytically active enzyme. Plays an important role in intrathymic T-cell differentiation. Additionally, participates in the activity-dependent synapse formation of retinal ganglion cells (RGCs) in both the retina and dorsal lateral geniculate nucleus (dLGN). The protein is T-cell surface glycoprotein CD3 zeta chain (CD247) of Sus scrofa (Pig).